The primary structure comprises 444 residues: ATP-dependent protease ATPase subunit HslU (444 aa).

Residues isoleucine 20 and 62-67 (GVGKTE) each bind ATP. The interval 130–158 (EDRILDALVPPPRGASGEPERGEDNSARQ) is disordered. The ATP site is built by aspartate 257, glutamate 322, and arginine 394.

It belongs to the ClpX chaperone family. HslU subfamily. A double ring-shaped homohexamer of HslV is capped on each side by a ring-shaped HslU homohexamer. The assembly of the HslU/HslV complex is dependent on binding of ATP.

It is found in the cytoplasm. In terms of biological role, ATPase subunit of a proteasome-like degradation complex; this subunit has chaperone activity. The binding of ATP and its subsequent hydrolysis by HslU are essential for unfolding of protein substrates subsequently hydrolyzed by HslV. HslU recognizes the N-terminal part of its protein substrates and unfolds these before they are guided to HslV for hydrolysis. The polypeptide is ATP-dependent protease ATPase subunit HslU (Bordetella parapertussis (strain 12822 / ATCC BAA-587 / NCTC 13253)).